The primary structure comprises 751 residues: Probable alpha-galactosidase C (751 aa).

An N-terminal signal peptide occupies residues 1–27 (MFGSPKRAALAAASLLAVFGNGPSVMA). 9 N-linked (GlcNAc...) asparagine glycosylation sites follow: asparagine 49, asparagine 57, asparagine 162, asparagine 186, asparagine 194, asparagine 366, asparagine 433, asparagine 452, and asparagine 500. Aspartate 510 serves as the catalytic Nucleophile. Residue aspartate 572 is the Proton donor of the active site. Asparagine 720 carries N-linked (GlcNAc...) asparagine glycosylation.

This sequence belongs to the glycosyl hydrolase 36 family. As to quaternary structure, homotetramer. It depends on Mg(2+) as a cofactor. NAD(+) serves as cofactor.

Its subcellular location is the secreted. The enzyme catalyses Hydrolysis of terminal, non-reducing alpha-D-galactose residues in alpha-D-galactosides, including galactose oligosaccharides, galactomannans and galactolipids.. Functionally, hydrolyzes a variety of simple alpha-D-galactoside as well as more complex molecules such as oligosaccharides and polysaccharides. This Aspergillus oryzae (strain ATCC 42149 / RIB 40) (Yellow koji mold) protein is Probable alpha-galactosidase C (aglC).